Consider the following 146-residue polypeptide: D-aminoacyl-tRNA deacylase (146 aa).

Positions 137-138 (GP) match the Gly-cisPro motif, important for rejection of L-amino acids motif.

The protein belongs to the DTD family. Homodimer.

Its subcellular location is the cytoplasm. The enzyme catalyses glycyl-tRNA(Ala) + H2O = tRNA(Ala) + glycine + H(+). It catalyses the reaction a D-aminoacyl-tRNA + H2O = a tRNA + a D-alpha-amino acid + H(+). In terms of biological role, an aminoacyl-tRNA editing enzyme that deacylates mischarged D-aminoacyl-tRNAs. Also deacylates mischarged glycyl-tRNA(Ala), protecting cells against glycine mischarging by AlaRS. Acts via tRNA-based rather than protein-based catalysis; rejects L-amino acids rather than detecting D-amino acids in the active site. By recycling D-aminoacyl-tRNA to D-amino acids and free tRNA molecules, this enzyme counteracts the toxicity associated with the formation of D-aminoacyl-tRNA entities in vivo and helps enforce protein L-homochirality. The chain is D-aminoacyl-tRNA deacylase from Anoxybacillus flavithermus (strain DSM 21510 / WK1).